Reading from the N-terminus, the 190-residue chain is GTP cyclohydrolase 1 (190 aa).

Cys78, His81, and Cys150 together coordinate Zn(2+).

The protein belongs to the GTP cyclohydrolase I family. In terms of assembly, toroid-shaped homodecamer, composed of two pentamers of five dimers.

The catalysed reaction is GTP + H2O = 7,8-dihydroneopterin 3'-triphosphate + formate + H(+). Its pathway is cofactor biosynthesis; 7,8-dihydroneopterin triphosphate biosynthesis; 7,8-dihydroneopterin triphosphate from GTP: step 1/1. Its activity is regulated as follows. K(+) ions moderately increases the Vmax, whereas UTP and Ca(2+) and Mg(2+) ions drastically increase the Km for GTP. This Bacillus subtilis (strain 168) protein is GTP cyclohydrolase 1 (folE).